The primary structure comprises 195 residues: Molybdopterin synthase catalytic subunit (195 aa).

The disordered stretch occupies residues 1 to 37 (MSARPEPQPGSERNATEPLPSHLDPTTYPRTLTTTHG). Residues 25–37 (PTTYPRTLTTTHG) are compositionally biased toward low complexity. Residues 141–142 (HR), lysine 157, and 164–166 (KRE) contribute to the substrate site.

The protein belongs to the MoaE family. MOCS2B subfamily. In terms of assembly, heterotetramer; composed of 2 small (MOCS2A) and 2 large (MOCS2B) subunits.

The protein localises to the cytoplasm. The enzyme catalyses 2 [molybdopterin-synthase sulfur-carrier protein]-C-terminal-Gly-aminoethanethioate + cyclic pyranopterin phosphate + H2O = molybdopterin + 2 [molybdopterin-synthase sulfur-carrier protein]-C-terminal Gly-Gly + 2 H(+). It functions in the pathway cofactor biosynthesis; molybdopterin biosynthesis. Catalytic subunit of the molybdopterin synthase complex, a complex that catalyzes the conversion of precursor Z into molybdopterin. Acts by mediating the incorporation of 2 sulfur atoms from thiocarboxylated MOCS2A into precursor Z to generate a dithiolene group. This chain is Molybdopterin synthase catalytic subunit, found in Emericella nidulans (strain FGSC A4 / ATCC 38163 / CBS 112.46 / NRRL 194 / M139) (Aspergillus nidulans).